Here is a 63-residue protein sequence, read N- to C-terminus: Large ribosomal subunit protein uL29 (63 aa).

It belongs to the universal ribosomal protein uL29 family.

This is Large ribosomal subunit protein uL29 from Klebsiella pneumoniae (strain 342).